The following is a 168-amino-acid chain: Cyanate hydratase (168 aa).

Residues Arg91, Glu94, and Ser117 contribute to the active site.

The protein belongs to the cyanase family.

The enzyme catalyses cyanate + hydrogencarbonate + 3 H(+) = NH4(+) + 2 CO2. Functionally, catalyzes the reaction of cyanate with bicarbonate to produce ammonia and carbon dioxide. In Arabidopsis thaliana (Mouse-ear cress), this protein is Cyanate hydratase.